The sequence spans 193 residues: Large ribosomal subunit protein bL21 (193 aa).

It belongs to the bacterial ribosomal protein bL21 family. As to quaternary structure, part of the 50S ribosomal subunit. Contacts protein L20.

Its function is as follows. This protein binds to 23S rRNA in the presence of protein L20. The polypeptide is Large ribosomal subunit protein bL21 (Ruegeria pomeroyi (strain ATCC 700808 / DSM 15171 / DSS-3) (Silicibacter pomeroyi)).